The following is a 115-amino-acid chain: NADH-ubiquinone oxidoreductase chain 3 (115 aa).

The next 3 membrane-spanning stretches (helical) occupy residues Leu4–Leu24, Phe55–Leu75, and Met87–Met107.

This sequence belongs to the complex I subunit 3 family. In terms of assembly, core subunit of respiratory chain NADH dehydrogenase (Complex I) which is composed of 45 different subunits. Interacts with TMEM186. Interacts with TMEM242.

Its subcellular location is the mitochondrion inner membrane. It catalyses the reaction a ubiquinone + NADH + 5 H(+)(in) = a ubiquinol + NAD(+) + 4 H(+)(out). Functionally, core subunit of the mitochondrial membrane respiratory chain NADH dehydrogenase (Complex I) which catalyzes electron transfer from NADH through the respiratory chain, using ubiquinone as an electron acceptor. Essential for the catalytic activity of complex I. The protein is NADH-ubiquinone oxidoreductase chain 3 of Habromys lophurus (Crested-tailed deer mouse).